A 256-amino-acid chain; its full sequence is Pyridoxine 5'-phosphate synthase (256 aa).

3-amino-2-oxopropyl phosphate is bound at residue Asn-12. Residue 14-15 (DH) coordinates 1-deoxy-D-xylulose 5-phosphate. Arg-23 provides a ligand contact to 3-amino-2-oxopropyl phosphate. The Proton acceptor role is filled by His-48. 2 residues coordinate 1-deoxy-D-xylulose 5-phosphate: Arg-50 and His-55. The active-site Proton acceptor is the Glu-75. Thr-105 is a 1-deoxy-D-xylulose 5-phosphate binding site. His-199 (proton donor) is an active-site residue. 3-amino-2-oxopropyl phosphate is bound by residues Gly-200 and 221–222 (GY).

Belongs to the PNP synthase family. As to quaternary structure, homooctamer; tetramer of dimers.

It is found in the cytoplasm. It catalyses the reaction 3-amino-2-oxopropyl phosphate + 1-deoxy-D-xylulose 5-phosphate = pyridoxine 5'-phosphate + phosphate + 2 H2O + H(+). It functions in the pathway cofactor biosynthesis; pyridoxine 5'-phosphate biosynthesis; pyridoxine 5'-phosphate from D-erythrose 4-phosphate: step 5/5. Its function is as follows. Catalyzes the complicated ring closure reaction between the two acyclic compounds 1-deoxy-D-xylulose-5-phosphate (DXP) and 3-amino-2-oxopropyl phosphate (1-amino-acetone-3-phosphate or AAP) to form pyridoxine 5'-phosphate (PNP) and inorganic phosphate. In Bradyrhizobium sp. (strain ORS 278), this protein is Pyridoxine 5'-phosphate synthase.